The following is a 529-amino-acid chain: UDP-glucuronosyltransferase 2B7 (529 aa).

Positions 1 to 23 are cleaved as a signal peptide; that stretch reads MSVKWTSVILLIQLSFCFSSGNC. 3 N-linked (GlcNAc...) asparagine glycosylation sites follow: asparagine 67, asparagine 68, and asparagine 315. Residues 373-379 and aspartate 398 contribute to the UDP-alpha-D-glucuronate site; that span reads THGGANG. The chain crosses the membrane as a helical span at residues 493–509; it reads VIGFLLVCVATVIFIVT.

The protein belongs to the UDP-glycosyltransferase family.

The protein localises to the endoplasmic reticulum membrane. The enzyme catalyses glucuronate acceptor + UDP-alpha-D-glucuronate = acceptor beta-D-glucuronoside + UDP + H(+). It catalyses the reaction 17alpha-estradiol + UDP-alpha-D-glucuronate = 17alpha-estradiol 17-O-(beta-D-glucuronate) + UDP + H(+). The catalysed reaction is 17beta-estradiol + UDP-alpha-D-glucuronate = 17beta-estradiol 17-O-(beta-D-glucuronate) + UDP + H(+). It carries out the reaction 2-hydroxy-17beta-estradiol + UDP-alpha-D-glucuronate = 2-hydroxy-17beta-estradiol 3-O-(beta-D-glucuronate) + UDP + H(+). The enzyme catalyses 4-hydroxy-17beta-estradiol + UDP-alpha-D-glucuronate = 17beta-estradiol 4-O-(beta-D-glucuronate) + UDP + H(+). It catalyses the reaction 4-hydroxyestrone + UDP-alpha-D-glucuronate = estrone 4-O-(beta-D-glucuronate) + UDP + H(+). The catalysed reaction is 16alpha-hydroxyestrone + UDP-alpha-D-glucuronate = 16alpha-hydroxyestrone 16-O-(beta-D-glucuronate) + UDP + H(+). It carries out the reaction 16alpha,17beta-estriol + UDP-alpha-D-glucuronate = 16alpha,17beta-estriol 16-O-(beta-D-glucuronate) + UDP + H(+). The enzyme catalyses 16beta,17beta-estriol + UDP-alpha-D-glucuronate = 16beta,17beta-estriol 16-O-(beta-D-glucuronate) + UDP + H(+). It catalyses the reaction 16alpha,17alpha-estriol + UDP-alpha-D-glucuronate = 16alpha,17alpha-estriol 16-O-(beta-D-glucuronate) + UDP + H(+). The catalysed reaction is 16alpha,17alpha-estriol + UDP-alpha-D-glucuronate = 16alpha,17alpha-estriol 17-O-(beta-D-glucuronate) + UDP + H(+). It carries out the reaction epitestosterone + UDP-alpha-D-glucuronate = epitestosterone 17-O-(beta-D-glucuronate) + UDP + H(+). The enzyme catalyses hyodeoxycholate + UDP-alpha-D-glucuronate = hyodeoxycholate 6-O-(beta-D-glucuronate) + UDP + H(+). It catalyses the reaction hyocholate + UDP-alpha-D-glucuronate = hyocholate 6-O-(beta-D-glucuronate) + UDP + H(+). The catalysed reaction is all-trans-retinoate + UDP-alpha-D-glucuronate = all-trans-retinoyl-1-O-(beta-D-glucuronate) + UDP. It carries out the reaction all-trans-4-hydroxyretinoate + UDP-alpha-D-glucuronate = all-trans-4-hydroxy-4-O-(beta-D-glucuronide)-retinoate + UDP + H(+). The enzyme catalyses (E)-ferulate + UDP-alpha-D-glucuronate = (E)-ferulic acid beta-D-glucuronate ester + UDP. It catalyses the reaction 8-iso-prostaglandin F2alpha + UDP-alpha-D-glucuronate = 8-iso-prostaglandin F2alpha-glucuronide + UDP + H(+). The catalysed reaction is 5-epi-5-F2t-IsoP + UDP-alpha-D-glucuronate = 5-epi-5-F2t-IsoP-glucuronide + UDP + H(+). It carries out the reaction (5Z,8Z,11Z,14Z)-eicosatetraenoate + UDP-alpha-D-glucuronate = O-[(5Z),(8Z),(11Z),(14Z)-eicosatetraenoyl]-beta-D-glucuronate + UDP. The enzyme catalyses 15-hydroxy-(5Z,8Z,11Z,13E)-eicosatetraenoate + UDP-alpha-D-glucuronate = 15-O-(beta-D-glucuronosyl)-(5Z,8Z,11Z,14Z)-eicosatetraenoate + UDP + H(+). It catalyses the reaction 20-hydroxy-(5Z,8Z,11Z,14Z)-eicosatetraenoate + UDP-alpha-D-glucuronate = 20-O-(beta-D-glucuronosyl)-(5Z,8Z,11Z,14Z)-eicosatetraenoate + UDP + H(+). The catalysed reaction is (E)-ferulate + UDP-alpha-D-glucuronate = (E)-4-O-(beta-D-glucuronosyl)-ferulate + UDP + H(+). It carries out the reaction prostaglandin B1 + UDP-alpha-D-glucuronate = 15-O-(beta-D-glucuronosyl)-prostaglandin B1 + UDP + H(+). The enzyme catalyses mycophenolate + UDP-alpha-D-glucuronate = mycophenolic acid O-acyl-beta-D-glucuronide + UDP. It catalyses the reaction losartan + UDP-alpha-D-glucuronate = losartan-2-N-beta-D-glucuronide + UDP. The catalysed reaction is candesartan + UDP-alpha-D-glucuronate = candesartan O-beta-D-glucuronoside + UDP. It carries out the reaction candesartan + UDP-alpha-D-glucuronate = candesartan-2-N-beta-D-glucuronide + UDP. The enzyme catalyses zolasartan + UDP-alpha-D-glucuronate = zolarsartan O-beta-D-glucuronoside + UDP. Functionally, UDP-glucuronosyltransferase (UGT) that catalyzes phase II biotransformation reactions in which lipophilic substrates are conjugated with glucuronic acid to increase the metabolite's water solubility, thereby facilitating excretion into either the urine or bile. Essential for the elimination and detoxification of drugs, xenobiotics and endogenous compounds. Catalyzes the glucuronidation of endogenous steroid hormones such as androgens (epitestosterone, androsterone) and estrogens (estradiol, epiestradiol, estriol, catechol estrogens). Also regulates the levels of retinoic acid, a major metabolite of vitamin A involved in apoptosis, cellular growth and differentiation, and embryonic development. Contributes to bile acid (BA) detoxification by catalyzing the glucuronidation of BA substrates, which are natural detergents for dietary lipids absorption. Involved in the glucuronidation of arachidonic acid (AA) and AA-derived eicosanoids including 15-HETE, 20-HETE, PGE2, PGB1 and F2-isoprostanes (8-iso-PGF2alpha and 5-epi-5-F2t-IsoP). Involved in the glucuronidation of the phytochemical ferulic acid at the phenolic or the carboxylic acid group. Involved in the glucuronidation of the AGTR1 angiotensin receptor antagonist losartan, caderastan and zolarsatan, drugs which can inhibit the effect of angiotensin II. Also metabolizes mycophenolate, an immunosuppressive agent. In Homo sapiens (Human), this protein is UDP-glucuronosyltransferase 2B7.